The sequence spans 477 residues: Exodeoxyribonuclease 7 large subunit (477 aa).

The segment at 452 to 477 is disordered; it reads KAAAAPKRVKKSPPPGTSGAQEDLFG.

This sequence belongs to the XseA family. As to quaternary structure, heterooligomer composed of large and small subunits.

It is found in the cytoplasm. The enzyme catalyses Exonucleolytic cleavage in either 5'- to 3'- or 3'- to 5'-direction to yield nucleoside 5'-phosphates.. Functionally, bidirectionally degrades single-stranded DNA into large acid-insoluble oligonucleotides, which are then degraded further into small acid-soluble oligonucleotides. This Erythrobacter litoralis (strain HTCC2594) protein is Exodeoxyribonuclease 7 large subunit.